Reading from the N-terminus, the 264-residue chain is S-adenosylmethionine decarboxylase proenzyme (264 aa).

S112 acts as the Schiff-base intermediate with substrate; via pyruvic acid in catalysis. At S112 the chain carries Pyruvic acid (Ser); by autocatalysis. The Proton acceptor; for processing activity role is filled by H117. C140 (proton donor; for catalytic activity) is an active-site residue.

This sequence belongs to the prokaryotic AdoMetDC family. Type 2 subfamily. In terms of assembly, heterooctamer of four alpha and four beta chains arranged as a tetramer of alpha/beta heterodimers. It depends on pyruvate as a cofactor. Post-translationally, is synthesized initially as an inactive proenzyme. Formation of the active enzyme involves a self-maturation process in which the active site pyruvoyl group is generated from an internal serine residue via an autocatalytic post-translational modification. Two non-identical subunits are generated from the proenzyme in this reaction, and the pyruvate is formed at the N-terminus of the alpha chain, which is derived from the carboxyl end of the proenzyme. The post-translation cleavage follows an unusual pathway, termed non-hydrolytic serinolysis, in which the side chain hydroxyl group of the serine supplies its oxygen atom to form the C-terminus of the beta chain, while the remainder of the serine residue undergoes an oxidative deamination to produce ammonia and the pyruvoyl group blocking the N-terminus of the alpha chain.

It carries out the reaction S-adenosyl-L-methionine + H(+) = S-adenosyl 3-(methylsulfanyl)propylamine + CO2. It participates in amine and polyamine biosynthesis; S-adenosylmethioninamine biosynthesis; S-adenosylmethioninamine from S-adenosyl-L-methionine: step 1/1. In terms of biological role, catalyzes the decarboxylation of S-adenosylmethionine to S-adenosylmethioninamine (dcAdoMet), the propylamine donor required for the synthesis of the polyamines spermine and spermidine from the diamine putrescine. This chain is S-adenosylmethionine decarboxylase proenzyme, found in Sodalis glossinidius (strain morsitans).